Reading from the N-terminus, the 813-residue chain is Protein translocase subunit SecA 2 (813 aa).

ATP is bound by residues Gln-105, 123-127 (GEGKT), and Asp-525.

This sequence belongs to the SecA family. Monomer and homodimer. Part of the essential Sec protein translocation apparatus which comprises SecA, SecYEG and auxiliary proteins SecDF-YajC and YidC.

The protein resides in the cell inner membrane. It localises to the cytoplasm. The enzyme catalyses ATP + H2O + cellular proteinSide 1 = ADP + phosphate + cellular proteinSide 2.. In terms of biological role, part of the Sec protein translocase complex. Interacts with the SecYEG preprotein conducting channel. Has a central role in coupling the hydrolysis of ATP to the transfer of proteins into and across the cell membrane, serving both as a receptor for the preprotein-SecB complex and as an ATP-driven molecular motor driving the stepwise translocation of polypeptide chains across the membrane. In Rhodopseudomonas palustris (strain BisA53), this protein is Protein translocase subunit SecA 2.